The chain runs to 135 residues: uncharacterized protein (135 aa).

Positions 13–129 constitute a Response regulatory domain; the sequence is QVLIAENSRF…KILEKVNAAI (117 aa). Asp64 bears the 4-aspartylphosphate mark.

This is an uncharacterized protein from Leptospira interrogans serogroup Icterohaemorrhagiae serovar copenhageni (strain Fiocruz L1-130).